The sequence spans 739 residues: Phosphoribosylformylglycinamidine synthase subunit PurL (739 aa).

Residue His54 is part of the active site. Tyr57 and Lys96 together coordinate ATP. Glu98 contacts Mg(2+). Substrate is bound by residues 99-102 (SHNH) and Arg121. His100 serves as the catalytic Proton acceptor. Asp122 serves as a coordination point for Mg(2+). Gln245 contacts substrate. Residue Asp273 participates in Mg(2+) binding. 317-319 (ESQ) provides a ligand contact to substrate. Positions 500 and 537 each coordinate ATP. Position 538 (Asn538) interacts with Mg(2+). A substrate-binding site is contributed by Ser540.

The protein belongs to the FGAMS family. Monomer. Part of the FGAM synthase complex composed of 1 PurL, 1 PurQ and 2 PurS subunits.

Its subcellular location is the cytoplasm. The catalysed reaction is N(2)-formyl-N(1)-(5-phospho-beta-D-ribosyl)glycinamide + L-glutamine + ATP + H2O = 2-formamido-N(1)-(5-O-phospho-beta-D-ribosyl)acetamidine + L-glutamate + ADP + phosphate + H(+). It participates in purine metabolism; IMP biosynthesis via de novo pathway; 5-amino-1-(5-phospho-D-ribosyl)imidazole from N(2)-formyl-N(1)-(5-phospho-D-ribosyl)glycinamide: step 1/2. Part of the phosphoribosylformylglycinamidine synthase complex involved in the purines biosynthetic pathway. Catalyzes the ATP-dependent conversion of formylglycinamide ribonucleotide (FGAR) and glutamine to yield formylglycinamidine ribonucleotide (FGAM) and glutamate. The FGAM synthase complex is composed of three subunits. PurQ produces an ammonia molecule by converting glutamine to glutamate. PurL transfers the ammonia molecule to FGAR to form FGAM in an ATP-dependent manner. PurS interacts with PurQ and PurL and is thought to assist in the transfer of the ammonia molecule from PurQ to PurL. This is Phosphoribosylformylglycinamidine synthase subunit PurL from Bacillus cereus (strain ATCC 10987 / NRS 248).